A 148-amino-acid chain; its full sequence is uncharacterized protein (148 aa).

This is an uncharacterized protein from Schizosaccharomyces pombe (strain 972 / ATCC 24843) (Fission yeast).